The sequence spans 285 residues: Alpha-acetolactate decarboxylase (285 aa).

An N-terminal signal peptide occupies residues 1–25 (MKKNIITSITSLALVAGLSLTAFAA).

It belongs to the alpha-acetolactate decarboxylase family.

The enzyme catalyses (2S)-2-acetolactate + H(+) = (R)-acetoin + CO2. It functions in the pathway polyol metabolism; (R,R)-butane-2,3-diol biosynthesis; (R,R)-butane-2,3-diol from pyruvate: step 2/3. In terms of biological role, converts acetolactate into acetoin, which can be excreted by the cells. This may be a mechanism for controlling the internal pH of cells in the stationary stage. In Brevibacillus brevis (Bacillus brevis), this protein is Alpha-acetolactate decarboxylase (aldB).